The sequence spans 338 residues: GTPase Obg (338 aa).

Positions 1–159 (MQFIDEVKIH…RWLRLELKLM (159 aa)) constitute an Obg domain. Residues 66 to 91 (KAGRGKNGMGKDRHGANGDDLTIPVP) are disordered. In terms of domain architecture, OBG-type G spans 160–331 (ADVGLLGFPN…LLDEIARHLW (172 aa)). GTP is bound by residues 166–173 (GFPNVGKS), 191–195 (FTTIK), 213–216 (DIPG), 283–286 (NKID), and 312–314 (SAA). 2 residues coordinate Mg(2+): Ser-173 and Thr-193.

Belongs to the TRAFAC class OBG-HflX-like GTPase superfamily. OBG GTPase family. As to quaternary structure, monomer. Requires Mg(2+) as cofactor.

It is found in the cytoplasm. Its function is as follows. An essential GTPase which binds GTP, GDP and possibly (p)ppGpp with moderate affinity, with high nucleotide exchange rates and a fairly low GTP hydrolysis rate. Plays a role in control of the cell cycle, stress response, ribosome biogenesis and in those bacteria that undergo differentiation, in morphogenesis control. This is GTPase Obg from Geobacter metallireducens (strain ATCC 53774 / DSM 7210 / GS-15).